The following is a 314-amino-acid chain: tRNA dimethylallyltransferase (314 aa).

36–43 (GPTASGKT) contributes to the ATP binding site. Residue 38-43 (TASGKT) participates in substrate binding. The interaction with substrate tRNA stretch occupies residues 61–64 (DSVQ).

Belongs to the IPP transferase family. In terms of assembly, monomer. Mg(2+) serves as cofactor.

The enzyme catalyses adenosine(37) in tRNA + dimethylallyl diphosphate = N(6)-dimethylallyladenosine(37) in tRNA + diphosphate. Functionally, catalyzes the transfer of a dimethylallyl group onto the adenine at position 37 in tRNAs that read codons beginning with uridine, leading to the formation of N6-(dimethylallyl)adenosine (i(6)A). This is tRNA dimethylallyltransferase from Sorangium cellulosum (strain So ce56) (Polyangium cellulosum (strain So ce56)).